A 392-amino-acid polypeptide reads, in one-letter code: Phospho-N-acetylmuramoyl-pentapeptide-transferase (392 aa).

A run of 10 helical transmembrane segments spans residues 28 to 48, 74 to 94, 100 to 120, 137 to 157, 193 to 213, 225 to 245, 262 to 282, 289 to 309, 314 to 334, and 369 to 389; these read RALMAALTALVVGLVAGPYVI, TPTMGGVLVLFAIAFATLMWF, FVWIVLWVTLGFGAIGWVDDW, YFWQSVVGLIAGFYLLFSISE, VSYPLGGIGFVILTYLVIVGA, GLAIMPVVMVGSALGVFAYVT, SGELLVFCSAMAGAGLAFLWF, VFMGDVGALALGGALGTIAVI, IVFFIMGGIFVVEAISVMAQV, and QVVVRFWIITMLLCLIGLSTL.

The protein belongs to the glycosyltransferase 4 family. MraY subfamily. Requires Mg(2+) as cofactor.

It is found in the cell inner membrane. The catalysed reaction is UDP-N-acetyl-alpha-D-muramoyl-L-alanyl-gamma-D-glutamyl-meso-2,6-diaminopimeloyl-D-alanyl-D-alanine + di-trans,octa-cis-undecaprenyl phosphate = di-trans,octa-cis-undecaprenyl diphospho-N-acetyl-alpha-D-muramoyl-L-alanyl-D-glutamyl-meso-2,6-diaminopimeloyl-D-alanyl-D-alanine + UMP. It functions in the pathway cell wall biogenesis; peptidoglycan biosynthesis. In terms of biological role, catalyzes the initial step of the lipid cycle reactions in the biosynthesis of the cell wall peptidoglycan: transfers peptidoglycan precursor phospho-MurNAc-pentapeptide from UDP-MurNAc-pentapeptide onto the lipid carrier undecaprenyl phosphate, yielding undecaprenyl-pyrophosphoryl-MurNAc-pentapeptide, known as lipid I. The protein is Phospho-N-acetylmuramoyl-pentapeptide-transferase of Variovorax paradoxus (strain S110).